Reading from the N-terminus, the 156-residue chain is ATP synthase subunit b (156 aa).

Residues 12-32 form a helical membrane-spanning segment; that stretch reads VAFLIFVLFCMKYVWPPVITA.

Belongs to the ATPase B chain family. In terms of assembly, F-type ATPases have 2 components, F(1) - the catalytic core - and F(0) - the membrane proton channel. F(1) has five subunits: alpha(3), beta(3), gamma(1), delta(1), epsilon(1). F(0) has three main subunits: a(1), b(2) and c(10-14). The alpha and beta chains form an alternating ring which encloses part of the gamma chain. F(1) is attached to F(0) by a central stalk formed by the gamma and epsilon chains, while a peripheral stalk is formed by the delta and b chains.

It is found in the cell inner membrane. Its function is as follows. F(1)F(0) ATP synthase produces ATP from ADP in the presence of a proton or sodium gradient. F-type ATPases consist of two structural domains, F(1) containing the extramembraneous catalytic core and F(0) containing the membrane proton channel, linked together by a central stalk and a peripheral stalk. During catalysis, ATP synthesis in the catalytic domain of F(1) is coupled via a rotary mechanism of the central stalk subunits to proton translocation. In terms of biological role, component of the F(0) channel, it forms part of the peripheral stalk, linking F(1) to F(0). This Pseudomonas putida (strain ATCC 47054 / DSM 6125 / CFBP 8728 / NCIMB 11950 / KT2440) protein is ATP synthase subunit b.